A 242-amino-acid chain; its full sequence is Glucosamine-6-phosphate deaminase (242 aa).

Asp-67 acts as the Proton acceptor; for enolization step in catalysis. The For ring-opening step role is filled by Asn-136. His-138 functions as the Proton acceptor; for ring-opening step in the catalytic mechanism. The For ring-opening step role is filled by Glu-143.

It belongs to the glucosamine/galactosamine-6-phosphate isomerase family. NagB subfamily.

It carries out the reaction alpha-D-glucosamine 6-phosphate + H2O = beta-D-fructose 6-phosphate + NH4(+). Its pathway is amino-sugar metabolism; N-acetylneuraminate degradation; D-fructose 6-phosphate from N-acetylneuraminate: step 5/5. Functionally, catalyzes the reversible isomerization-deamination of glucosamine 6-phosphate (GlcN6P) to form fructose 6-phosphate (Fru6P) and ammonium ion. This chain is Glucosamine-6-phosphate deaminase, found in Clostridium perfringens (strain 13 / Type A).